Consider the following 280-residue polypeptide: Pantothenate synthetase (280 aa).

An ATP-binding site is contributed by 30 to 37 (MGYLHEGH). His37 serves as the catalytic Proton donor. Gln61 contacts (R)-pantoate. Residue Gln61 participates in beta-alanine binding. 147–150 (GQKD) serves as a coordination point for ATP. Gln153 provides a ligand contact to (R)-pantoate. Residues Val176 and 184 to 187 (MSSR) each bind ATP.

The protein belongs to the pantothenate synthetase family. Homodimer.

It is found in the cytoplasm. It carries out the reaction (R)-pantoate + beta-alanine + ATP = (R)-pantothenate + AMP + diphosphate + H(+). It functions in the pathway cofactor biosynthesis; (R)-pantothenate biosynthesis; (R)-pantothenate from (R)-pantoate and beta-alanine: step 1/1. Its function is as follows. Catalyzes the condensation of pantoate with beta-alanine in an ATP-dependent reaction via a pantoyl-adenylate intermediate. The polypeptide is Pantothenate synthetase (Fervidobacterium nodosum (strain ATCC 35602 / DSM 5306 / Rt17-B1)).